The primary structure comprises 270 residues: 4-hydroxy-tetrahydrodipicolinate reductase (270 aa).

NAD(+)-binding positions include 8–13 (GAAGRM) and E34. Residue R35 coordinates NADP(+). NAD(+)-binding positions include 98-100 (GST) and 122-125 (SPNM). Residue H155 is the Proton donor/acceptor of the active site. H156 contacts (S)-2,3,4,5-tetrahydrodipicolinate. The Proton donor role is filled by K159. Residue 165–166 (GT) coordinates (S)-2,3,4,5-tetrahydrodipicolinate.

The protein belongs to the DapB family.

The protein localises to the cytoplasm. The enzyme catalyses (S)-2,3,4,5-tetrahydrodipicolinate + NAD(+) + H2O = (2S,4S)-4-hydroxy-2,3,4,5-tetrahydrodipicolinate + NADH + H(+). The catalysed reaction is (S)-2,3,4,5-tetrahydrodipicolinate + NADP(+) + H2O = (2S,4S)-4-hydroxy-2,3,4,5-tetrahydrodipicolinate + NADPH + H(+). Its pathway is amino-acid biosynthesis; L-lysine biosynthesis via DAP pathway; (S)-tetrahydrodipicolinate from L-aspartate: step 4/4. Catalyzes the conversion of 4-hydroxy-tetrahydrodipicolinate (HTPA) to tetrahydrodipicolinate. In Anaeromyxobacter dehalogenans (strain 2CP-C), this protein is 4-hydroxy-tetrahydrodipicolinate reductase.